A 265-amino-acid polypeptide reads, in one-letter code: Small ribosomal subunit protein uS3 (265 aa).

The 69-residue stretch at 43–111 (IRTMLKTSLD…QIQLNILEVK (69 aa)) folds into the KH type-2 domain. The disordered stretch occupies residues 217–265 (AREQANQKSSRPERRNDRSDGRTGDRRTNAPRTAPAAEAAPVAAAGVEA). The segment covering 226-244 (SRPERRNDRSDGRTGDRRT) has biased composition (basic and acidic residues). The span at 250-265 (APAAEAAPVAAAGVEA) shows a compositional bias: low complexity.

This sequence belongs to the universal ribosomal protein uS3 family. As to quaternary structure, part of the 30S ribosomal subunit. Forms a tight complex with proteins S10 and S14.

In terms of biological role, binds the lower part of the 30S subunit head. Binds mRNA in the 70S ribosome, positioning it for translation. The protein is Small ribosomal subunit protein uS3 of Clavibacter michiganensis subsp. michiganensis (strain NCPPB 382).